A 1367-amino-acid polypeptide reads, in one-letter code: Protein patched homolog 3 (1367 aa).

Residues 1–97 (MSFPDEETDL…WLFRIGCFVQ (97 aa)) lie on the Cytoplasmic side of the membrane. Residues 98–118 (RWAWSTIFISLFLYCLCLGGL) form a helical membrane-spanning segment. Over 119–625 (RHVTIETDLV…IADMLEEFSQ (507 aa)) the chain is Extracellular. N-linked (GlcNAc...) asparagine glycans are attached at residues Asn235, Asn310, Asn454, and Asn591. The helical transmembrane segment at 626–646 (FNYIIIVIGYILMVIYAAFTQ) threads the bilayer. One can recognise an SSD domain in the interval 627-788 (NYIIIVIGYI…MFIFPAMIGI (162 aa)). Over 647-659 (GRFQGWWLAVQSN) the chain is Cytoplasmic. The helical transmembrane segment at 660–680 (VALAICGVILVTISSICGLGF) threads the bilayer. Residues 681-694 (ATHLGINFNAATTQ) lie on the Extracellular side of the membrane. The helical transmembrane segment at 695–715 (VVPFLSLGLGIDDMFLLLHNY) threads the bilayer. The Cytoplasmic portion of the chain corresponds to 716–737 (DEIINICNKNEIGVLLKETGMS). The chain crosses the membrane as a helical span at residues 738-758 (VMLTSINNILAFISGYVLPIP). Residues 759–767 (ALRSFCSQT) lie on the Extracellular side of the membrane. A helical membrane pass occupies residues 768 to 788 (AILLAFNLIFLMFIFPAMIGI). Residues 789 to 863 (DLRRQRKGKR…KIYIPALKNN (75 aa)) are Cytoplasmic-facing. A helical membrane pass occupies residues 864 to 884 (VVKACVLIGTTTAVVFGLYGM). The Extracellular portion of the chain corresponds to 885–1143 (YTSTLGLELA…WEQYLTLRWN (259 aa)). A helical transmembrane segment spans residues 1144–1164 (LFQAICIIALAVFCVISILMF). The Cytoplasmic segment spans residues 1165 to 1171 (NPWAATL). The helical transmembrane segment at 1172 to 1192 (IMCIVVITTIELGGFMGLMGI) threads the bilayer. The Extracellular portion of the chain corresponds to 1193–1199 (KMNPISA). Residues 1200–1220 (VTLICAVGIGVEFTAHVELAF) form a helical membrane-spanning segment. Topologically, residues 1221–1237 (LTALGTIDQRLESCLQH) are cytoplasmic. The chain crosses the membrane as a helical span at residues 1238–1258 (MFVPVYHGAISTFLGVVMLVF). Topologically, residues 1259–1273 (SEFDFVVTYFFYTMT) are extracellular. Residues 1274 to 1294 (LLVALGVFNGLCVLPVILTLV) traverse the membrane as a helical segment. The Cytoplasmic portion of the chain corresponds to 1295–1367 (GPKPELTPTD…SDDESSPAHK (73 aa)). The segment at 1302 to 1367 (PTDGSSVLPP…SDDESSPAHK (66 aa)) is disordered. The segment covering 1346–1356 (RDSPSTSSASH) has biased composition (low complexity).

This sequence belongs to the patched family. As to expression, in males, expressed in the precursor and mature sensory rays, the cloaca, and pre-anal ganglia and cephalic neurons. Also expressed in five cells in the valve region between the seminal vesicle and vas deferens of the somatic gonad.

Its subcellular location is the apical cell membrane. The protein localises to the cell junction. It localises to the adherens junction. Its function is as follows. Regulates osmosis during embryonic development. Required for larval development and in particular is involved in larval molting. The polypeptide is Protein patched homolog 3 (Caenorhabditis elegans).